A 1089-amino-acid polypeptide reads, in one-letter code: Importin subunit beta-3 (1089 aa).

Ser2 carries the post-translational modification N-acetylserine. HEAT repeat units follow at residues 6 to 39, 44 to 78, 96 to 129, 138 to 165, 175 to 207, 216 to 252, 260 to 295, 304 to 359, 361 to 395, 399 to 439, 441 to 481, 484 to 524, 526 to 568, 571 to 613, 615 to 689, 692 to 735, 742 to 781, 788 to 849, 852 to 890, 898 to 930, 938 to 978, 986 to 1017, 1028 to 1063, and 1066 to 1089; these read EEVN…EEWI, IEYL…ALKA, KEVL…IAEC, PELL…ILTT, INSI…YFKQ, LGIL…LVEL, MFDQ…FSEN, QNYG…ALKL, GEYL…SSAA, ADVL…STDF, PFIQ…FSEF, KDIL…AEAA, NKFI…GFAV, EKFH…CRIL, DDFV…ATLL, QFAV…LLAA, ELVL…IKVM, EDQL…LKTT, HYLK…IQYG, KNAF…CAQY, VCIP…LYAY, DTYT…QLIE, NISA…LLGF, and SSDA…KWFA. The residue at position 830 (Thr830) is a Phosphothreonine.

It belongs to the importin beta family. Importin beta-3 subfamily. As to quaternary structure, interacts with Ran (GSP1); interacts specifically with the GTP-bound form of Ran (GTP-Ran), protecting it from GTP hydrolysis and nucleotide exchange. Interacts with RPL25; this interaction is dissociated by binding to Ran-GTP. Interacts with YAP1; this interaction is dissociated by binding to Ran-GTP. Interacts with NOP1; via its rg-NLS. Interacts with SOF1; via its cNLS. Interacts with histones H3 and H4; via their NLS. Interacts with ABF1.

It is found in the cytoplasm. The protein localises to the nucleus. In terms of biological role, functions in nuclear protein import as nuclear transport receptor. Serves as receptor for classical and arginine/glycine-rich nuclear localization signals (cNLS and rg-NLS) in cargo substrates. Its predominant cargo substrate seems to be ribosomal proteins and ribosome biogenesis trans- and cis-acting factors. Required for nuclear transport of YAP1, NOP1 and SOF1. Mediates the nuclear import of histones H3 and H4. Mediates docking of the importin/substrate complex to the nuclear pore complex (NPC) through binding to repeat-containing nucleoporins. The complex is subsequently translocated through the pore by an energy requiring, Ran-dependent mechanism. At the nucleoplasmic side of the NPC, GTP-Ran binding leads to release of the cargo. The importin is re-exported from the nucleus to the cytoplasm where GTP hydrolysis releases Ran from importin. The directionality of nuclear import is thought to be conferred by an asymmetric distribution of the GTP- and GDP-bound forms of Ran between the cytoplasm and nucleus. Plays a role in protein secretion. This is Importin subunit beta-3 from Saccharomyces cerevisiae (strain ATCC 204508 / S288c) (Baker's yeast).